A 415-amino-acid chain; its full sequence is Serine--tRNA ligase (415 aa).

231–233 is an L-serine binding site; the sequence is TAE. ATP is bound at residue 262–264; the sequence is RSE. Glu-285 contributes to the L-serine binding site. 349 to 352 serves as a coordination point for ATP; that stretch reads EISS. Ser-383 contacts L-serine.

The protein belongs to the class-II aminoacyl-tRNA synthetase family. Type-1 seryl-tRNA synthetase subfamily. In terms of assembly, homodimer. The tRNA molecule binds across the dimer.

It localises to the cytoplasm. The catalysed reaction is tRNA(Ser) + L-serine + ATP = L-seryl-tRNA(Ser) + AMP + diphosphate + H(+). It carries out the reaction tRNA(Sec) + L-serine + ATP = L-seryl-tRNA(Sec) + AMP + diphosphate + H(+). The protein operates within aminoacyl-tRNA biosynthesis; selenocysteinyl-tRNA(Sec) biosynthesis; L-seryl-tRNA(Sec) from L-serine and tRNA(Sec): step 1/1. In terms of biological role, catalyzes the attachment of serine to tRNA(Ser). Is also able to aminoacylate tRNA(Sec) with serine, to form the misacylated tRNA L-seryl-tRNA(Sec), which will be further converted into selenocysteinyl-tRNA(Sec). This is Serine--tRNA ligase from Helicobacter pylori (strain G27).